The chain runs to 346 residues: MQQEKELVKQKAKELLLDLLSIYTPSKNETNATKFFEKISNEFNLKLEILPDSNSFILGEGEILLASHVDTVPGYIEPKIENEVIYGRGAVDAKGPLISMIIAAWLLNEKGIKVMVSGLADEESTSIGAKELTLKNFNFKHIIVGEPSNGTDIVVEYRGSIQLDIMCESTPEHSSSAKSNLIVDISKKIIEVYKQPENYDKPSIVPTIIRAGESYNVTPAKLYLHFDVRYAINNKRDDLINEIKDKFQECGLKIVDETQPVKVSINNPVVKSLTRALLKQNIKPRLVRKAGTSDMNILQKITTSIATYGPGNSMLEHTNQEKITLDEIYIGVKTYMLAIEELWQKS.

Zn(2+) is bound at residue histidine 68. Aspartate 70 is a catalytic residue. Aspartate 92 contributes to the Zn(2+) binding site. Glutamate 122 serves as the catalytic Proton acceptor. Zn(2+)-binding residues include glutamate 123, glutamate 146, and histidine 317.

It belongs to the peptidase M20A family. LysK subfamily. Requires Zn(2+) as cofactor. The cofactor is Co(2+).

The protein resides in the cytoplasm. The catalysed reaction is [amino-group carrier protein]-C-terminal-gamma-(L-lysyl)-L-glutamate + H2O = [amino-group carrier protein]-C-terminal-L-glutamate + L-lysine. It catalyses the reaction [amino-group carrier protein]-C-terminal-gamma-(L-ornithyl)-L-glutamate + H2O = [amino-group carrier protein]-C-terminal-L-glutamate + L-ornithine. It participates in amino-acid biosynthesis; L-lysine biosynthesis via AAA pathway; L-lysine from L-alpha-aminoadipate (Thermus route): step 5/5. The protein operates within amino-acid biosynthesis; L-arginine biosynthesis. In terms of biological role, catalyzes the release of L-lysine from [LysW]-gamma-L-lysine and the release of L-ornithine from [LysW]-L-ornithine. This chain is [LysW]-lysine/[LysW]-ornithine hydrolase, found in Saccharolobus islandicus (strain Y.N.15.51 / Yellowstone #2) (Sulfolobus islandicus).